Here is a 572-residue protein sequence, read N- to C-terminus: 3-ketosteroid oxygenase (572 aa).

2 helical membrane-spanning segments follow: residues Ala-52 to Leu-72 and Tyr-84 to Ile-104.

It belongs to the cytochrome P450 family. Expressed in the 2 embryonic head hypodermal cells XXXL/R.

The protein localises to the membrane. The enzyme catalyses 5alpha-cholest-7-en-3-one + 3 reduced [NADPH--hemoprotein reductase] + 3 O2 = (25S)-Delta7-dafachronate + 3 oxidized [NADPH--hemoprotein reductase] + 4 H2O + 4 H(+). The catalysed reaction is cholest-4-en-3-one + 3 reduced [NADPH--hemoprotein reductase] + 3 O2 = (25S)-3-oxocholest-4-en-26-oate + 3 oxidized [NADPH--hemoprotein reductase] + 4 H2O + 4 H(+). It participates in steroid hormone biosynthesis; dafachronic acid biosynthesis. Its function is as follows. Converts the 3-keto steroids 4-cholesten-3-one and lathosterone into the carboxylic metabolites 3-keto-4-cholestenate (Delta(4)-dafachronic acid, Delta(4)-DA) and 3-keto-7,(5a)-cholestenate (Delta(7)-dafachronic acid, Delta(7)-DA) respectively, by catalyzing successive oxidations at C-26. Dafachronic acids bind directly to the nuclear hormone receptor (NHR) DAF-12, suppressing dauer formation and inducing reproductive growth. In a non-cell autonomous manner, negatively regulates body wall muscle arm extensions to motor neurons probably by preventing daf-12 isoform b activation. May be involved in thermotolerance. This chain is 3-ketosteroid oxygenase (daf-9), found in Caenorhabditis elegans.